Consider the following 347-residue polypeptide: Histidinol-phosphate aminotransferase (347 aa).

At Lys209 the chain carries N6-(pyridoxal phosphate)lysine.

This sequence belongs to the class-II pyridoxal-phosphate-dependent aminotransferase family. Histidinol-phosphate aminotransferase subfamily. Homodimer. Requires pyridoxal 5'-phosphate as cofactor.

It carries out the reaction L-histidinol phosphate + 2-oxoglutarate = 3-(imidazol-4-yl)-2-oxopropyl phosphate + L-glutamate. Its pathway is amino-acid biosynthesis; L-histidine biosynthesis; L-histidine from 5-phospho-alpha-D-ribose 1-diphosphate: step 7/9. The protein is Histidinol-phosphate aminotransferase of Syntrophotalea carbinolica (strain DSM 2380 / NBRC 103641 / GraBd1) (Pelobacter carbinolicus).